The following is a 231-amino-acid chain: F-box protein SKIP8 (231 aa).

Residues 1–24 (MPSTPLANGGTPPMGGGERTTVTT) form a disordered region. In terms of domain architecture, F-box spans 34 to 80 (VSMMEQLVPEITTHALSYLDYPSLCRLSMTNSLMRKAANDDNAWKAL).

Part of a SCF (ASK-cullin-F-box) protein ligase complex. Interacts with SKP1A/ASK1.

Its pathway is protein modification; protein ubiquitination. Its function is as follows. Component of SCF(ASK-cullin-F-box) E3 ubiquitin ligase complexes, which may mediate the ubiquitination and subsequent proteasomal degradation of target proteins. The polypeptide is F-box protein SKIP8 (SKIP8) (Arabidopsis thaliana (Mouse-ear cress)).